A 512-amino-acid chain; its full sequence is Probable cytosol aminopeptidase (512 aa).

Mn(2+) is bound by residues lysine 281 and aspartate 286. The active site involves lysine 293. Aspartate 304, aspartate 363, and glutamate 365 together coordinate Mn(2+). Residue arginine 367 is part of the active site.

Belongs to the peptidase M17 family. The cofactor is Mn(2+).

The protein localises to the cytoplasm. It carries out the reaction Release of an N-terminal amino acid, Xaa-|-Yaa-, in which Xaa is preferably Leu, but may be other amino acids including Pro although not Arg or Lys, and Yaa may be Pro. Amino acid amides and methyl esters are also readily hydrolyzed, but rates on arylamides are exceedingly low.. The enzyme catalyses Release of an N-terminal amino acid, preferentially leucine, but not glutamic or aspartic acids.. Functionally, presumably involved in the processing and regular turnover of intracellular proteins. Catalyzes the removal of unsubstituted N-terminal amino acids from various peptides. This Koribacter versatilis (strain Ellin345) protein is Probable cytosol aminopeptidase.